The following is a 158-amino-acid chain: MRCPYCGSEDTQVKDSRPAEDNTSIRRRRICPDCGGRFTTFERVQLRELMVIKKTGRKVLFDRDKLVRSFEIALRKRPVDRDRIERAVSGIVRRLESSGETEISSEQIGLQVLEALKSLDDVAFVRYASVYRDFSHAEDFENVITEINAKIARDPLDP.

A disordered region spans residues M1–N22. The segment at C3 to C34 is a zinc-finger region. A compositionally biased stretch (basic and acidic residues) spans T11–N22. In terms of domain architecture, ATP-cone spans L49–D139.

The protein belongs to the NrdR family. Zn(2+) serves as cofactor.

Functionally, negatively regulates transcription of bacterial ribonucleotide reductase nrd genes and operons by binding to NrdR-boxes. This chain is Transcriptional repressor NrdR, found in Rhizobium rhizogenes (strain K84 / ATCC BAA-868) (Agrobacterium radiobacter).